The primary structure comprises 143 residues: uncharacterized protein (143 aa).

Residues 1 to 27 (MSDEIARLVADVFELAGLLRRSGEVVA) form the signal peptide.

This is an uncharacterized protein from Mycobacterium tuberculosis (strain CDC 1551 / Oshkosh).